We begin with the raw amino-acid sequence, 184 residues long: Ribosome-recycling factor (184 aa).

It belongs to the RRF family.

It is found in the cytoplasm. Its function is as follows. Responsible for the release of ribosomes from messenger RNA at the termination of protein biosynthesis. May increase the efficiency of translation by recycling ribosomes from one round of translation to another. The protein is Ribosome-recycling factor of Psychrobacter sp. (strain PRwf-1).